Here is a 195-residue protein sequence, read N- to C-terminus: MTFALPDNATLSLFLLPLLVFFARIIDVSIGTLRIIFVARSLKGWAGVLGFFESLIWVLAISQVMQNLTNVWTYIAFALGFATGNYVGVLIEERIAIGSLIVRIITRKDATVLTEHLWKAGYGVTNLQAHGETGPVRLIFTVCRRRDVKDVLRMVKQFNPRAFYTIEDVRFVQDNLPVVPRRHGIMSRLALRNRK.

The next 3 helical transmembrane spans lie at 13–33, 45–65, and 71–91; these read LFLLPLLVFFARIIDVSIGTL, WAGVLGFFESLIWVLAISQVM, and VWTYIAFALGFATGNYVGVLI.

This sequence belongs to the UPF0316 family.

Its subcellular location is the cell membrane. The polypeptide is UPF0316 protein Pcar_2434 (Syntrophotalea carbinolica (strain DSM 2380 / NBRC 103641 / GraBd1) (Pelobacter carbinolicus)).